The sequence spans 177 residues: Photosystem I assembly protein Ycf4 (177 aa).

The next 2 helical transmembrane spans lie at 20 to 40 (VALLVSIGGVGFLLTSASSYF) and 60 to 80 (LVMGAYGVGAVLLSSYLWAVI).

Belongs to the Ycf4 family.

The protein resides in the cellular thylakoid membrane. Its function is as follows. Seems to be required for the assembly of the photosystem I complex. The chain is Photosystem I assembly protein Ycf4 from Synechococcus sp. (strain RCC307).